Reading from the N-terminus, the 150-residue chain is Endoribonuclease YbeY (150 aa).

Zn(2+) is bound by residues His-113, His-117, and His-123.

The protein belongs to the endoribonuclease YbeY family. Zn(2+) is required as a cofactor.

It localises to the cytoplasm. Functionally, single strand-specific metallo-endoribonuclease involved in late-stage 70S ribosome quality control and in maturation of the 3' terminus of the 16S rRNA. The sequence is that of Endoribonuclease YbeY from Wolbachia sp. subsp. Drosophila simulans (strain wRi).